The chain runs to 185 residues: Putative manganese efflux pump MntP (185 aa).

The next 6 membrane-spanning stretches (helical) occupy residues 4–24 (LTSS…ALAI), 36–56 (ALVI…AGWI), 65–85 (ISSY…IKMI), 105–125 (VILL…SFGV), 130–150 (VLMP…AGVF), and 165–185 (IFGG…ILPL).

Belongs to the MntP (TC 9.B.29) family.

It localises to the cell membrane. Its function is as follows. Probably functions as a manganese efflux pump. This chain is Putative manganese efflux pump MntP, found in Methanoregula boonei (strain DSM 21154 / JCM 14090 / 6A8).